We begin with the raw amino-acid sequence, 540 residues long: Solute carrier family 2, facilitated glucose transporter member 9 (540 aa).

A disordered region spans residues 1–31 (MARKQNRNSKELGLVPLTDDTSHAGPPGPGR). Over 1–51 (MARKQNRNSKELGLVPLTDDTSHAGPPGPGRALLECDHLRSGVPGGRRRKD) the chain is Cytoplasmic. Ser9 carries the phosphoserine modification. Residues 52-72 (WSCSLLVASLAGAFGSSFLYG) traverse the membrane as a helical segment. At 73 to 107 (YNLSVVNAPTPYIKAFYNESWERRHGRPIDPDTLT) the chain is on the extracellular side. N-linked (GlcNAc...) asparagine glycosylation occurs at Asn90. A helical transmembrane segment spans residues 108–128 (LLWSVTVSIFAIGGLVGTLIV). Residues 129-140 (KMIGKVLGRKHT) lie on the Cytoplasmic side of the membrane. The helical transmembrane segment at 141–161 (LLANNGFAISAALLMACSLQA) threads the bilayer. At 162–171 (GAFEMLIVGR) the chain is on the extracellular side. Residues 172-192 (FIMGIDGGVALSVLPMYLSEI) traverse the membrane as a helical segment. Residues 193–200 (SPKEIRGS) are Cytoplasmic-facing. Residues 201-221 (LGQVTAIFICIGVFTGQLLGL) traverse the membrane as a helical segment. Residues 222–231 (PELLGKESTW) are Extracellular-facing. The chain crosses the membrane as a helical span at residues 232–252 (PYLFGVIVVPAVVQLLSLPFL). Residues 253-316 (PDSPRYLLLE…LLRAPYVRWQ (64 aa)) lie on the Cytoplasmic side of the membrane. The chain crosses the membrane as a helical span at residues 317 to 337 (VVTVIVTMACYQLCGLNAIWF). At 338–354 (YTNSIFGKAGIPPAKIP) the chain is on the extracellular side. A helical transmembrane segment spans residues 355-375 (YVTLSTGGIETLAAVFSGLVI). Residues 376–381 (EHLGRR) lie on the Cytoplasmic side of the membrane. The helical transmembrane segment at 382 to 402 (PLLIGGFGLMGLFFGTLTITL) threads the bilayer. Topologically, residues 403 to 415 (TLQDHAPWVPYLS) are extracellular. The chain crosses the membrane as a helical span at residues 416-436 (IVGILAIIASFCSGPGGIPFI). The Cytoplasmic portion of the chain corresponds to 437-451 (LTGEFFQQSQRPAAF). The chain crosses the membrane as a helical span at residues 452–472 (IIAGTVNWLSNFAVGLLFPFI). Residues 473 to 478 (QKSLDT) lie on the Extracellular side of the membrane. A helical membrane pass occupies residues 479 to 499 (YCFLVFATICITGAIYLYFVL). The Cytoplasmic portion of the chain corresponds to 500-540 (PETKNRTYAEISQAFSKRNKAYPPEEKIDSAVTDGKINGRP). The residue at position 515 (Ser515) is a Phosphoserine. A disordered region spans residues 519 to 540 (KAYPPEEKIDSAVTDGKINGRP).

Belongs to the major facilitator superfamily. Sugar transporter (TC 2.A.1.1) family. Glucose transporter subfamily. Most strongly expressed in basolateral membranes of proximal renal tubular cells, liver and placenta. Also detected in lung, blood leukocytes, heart skeletal muscle and chondrocytes from articular cartilage. Detected in kidney membrane (at protein level). In terms of tissue distribution, only detected in the apical membranes of polarized renal tubular cells and placenta. Detected in kidney membrane (at protein level).

It is found in the cell membrane. Its subcellular location is the basolateral cell membrane. It localises to the apical cell membrane. It carries out the reaction urate(out) = urate(in). Extracellular glucose and urate accelerate urate efflux. Intracellular urate, glucose and fructose accelerate urate influx. Its activity is regulated as follows. No effect of extracellular urate, glucose or fructose on urate efflux. Intracellular urate and fructose slightly accelerate urate influx. High-capacity urate transporter, which may play a role in the urate reabsorption by proximal tubules. May have a residual high-affinity, low-capacity glucose and fructose transporter activity. Transports urate at rates 45- to 60-fold faster than glucose. Does not transport galactose. May mediate small uptake of adenine but not of other nucleobases. The chain is Solute carrier family 2, facilitated glucose transporter member 9 from Homo sapiens (Human).